The primary structure comprises 612 residues: Isocitrate dehydrogenase kinase/phosphatase (612 aa).

Residues 327–333 and K348 contribute to the ATP site; that span reads APGIKGL. D383 is an active-site residue. The tract at residues 593 to 612 is disordered; sequence AGRASPEPDAPADARSVRVA.

Belongs to the AceK family.

The protein localises to the cytoplasm. It carries out the reaction L-seryl-[isocitrate dehydrogenase] + ATP = O-phospho-L-seryl-[isocitrate dehydrogenase] + ADP + H(+). Functionally, bifunctional enzyme which can phosphorylate or dephosphorylate isocitrate dehydrogenase (IDH) on a specific serine residue. This is a regulatory mechanism which enables bacteria to bypass the Krebs cycle via the glyoxylate shunt in response to the source of carbon. When bacteria are grown on glucose, IDH is fully active and unphosphorylated, but when grown on acetate or ethanol, the activity of IDH declines drastically concomitant with its phosphorylation. This Paraburkholderia phytofirmans (strain DSM 17436 / LMG 22146 / PsJN) (Burkholderia phytofirmans) protein is Isocitrate dehydrogenase kinase/phosphatase.